The following is a 262-amino-acid chain: MALLELERISAQYPGAETPVLADINLSLGPRQLLVALGPSGSGKTSLLNLIAGFVAPSGGRITLDGVPVQGPGAERGVVFQDDALLPWQNVLGNVAFGLELAGVPRAEREAKAREMLALVDLDGFGERRIWQLSGGQKQRVGLARALAADPRVLLMDEPFGALDAFTREQMQELLLQVWQRTAKPVFLITHDIEEAVFLASELVLLAPNPGRVVERLQLDFGQRYAAGESARAIKSDPAFIETREHVLARVFSQRQSLQERA.

An ABC transporter domain is found at 4-233 (LELERISAQY…RYAAGESARA (230 aa)). 38–45 (GPSGSGKT) contributes to the ATP binding site.

It belongs to the ABC transporter superfamily. Taurine importer (TC 3.A.1.17.1) family. The complex is composed of two ATP-binding proteins (TauB), two transmembrane proteins (TauC) and a solute-binding protein (TauA).

The protein resides in the cell inner membrane. The catalysed reaction is taurine(out) + ATP + H2O = taurine(in) + ADP + phosphate + H(+). Its function is as follows. Part of the ABC transporter complex TauABC involved in taurine import. Responsible for energy coupling to the transport system. The sequence is that of Taurine import ATP-binding protein TauB from Pseudomonas putida (Arthrobacter siderocapsulatus).